Consider the following 671-residue polypeptide: UvrABC system protein B (671 aa).

The region spanning 25 to 412 (EGIDAGLAHQ…AGRIVEQVVR (388 aa)) is the Helicase ATP-binding domain. 38 to 45 (GVTGSGKT) contacts ATP. The Beta-hairpin signature appears at 91–114 (YYDYYQPEAYVPSSDTFIEKDASI). The Helicase C-terminal domain maps to 429 to 582 (QVDDLLSEIH…QIAFNLEHGI (154 aa)). Residues 601–624 (PGSRSKKRKGMAKAAEENARYENE) form a disordered region. Residues 614-624 (AAEENARYENE) are compositionally biased toward basic and acidic residues. The UVR domain occupies 632–667 (NKRIRQLEEKMYQLARDLEFEAAAQMRDEIGKLRER).

This sequence belongs to the UvrB family. In terms of assembly, forms a heterotetramer with UvrA during the search for lesions. Interacts with UvrC in an incision complex.

The protein resides in the cytoplasm. The UvrABC repair system catalyzes the recognition and processing of DNA lesions. A damage recognition complex composed of 2 UvrA and 2 UvrB subunits scans DNA for abnormalities. Upon binding of the UvrA(2)B(2) complex to a putative damaged site, the DNA wraps around one UvrB monomer. DNA wrap is dependent on ATP binding by UvrB and probably causes local melting of the DNA helix, facilitating insertion of UvrB beta-hairpin between the DNA strands. Then UvrB probes one DNA strand for the presence of a lesion. If a lesion is found the UvrA subunits dissociate and the UvrB-DNA preincision complex is formed. This complex is subsequently bound by UvrC and the second UvrB is released. If no lesion is found, the DNA wraps around the other UvrB subunit that will check the other stand for damage. The protein is UvrABC system protein B of Pseudomonas syringae pv. syringae (strain B728a).